A 306-amino-acid polypeptide reads, in one-letter code: tRNA pseudouridine synthase B (306 aa).

The Nucleophile role is filled by Asp43.

This sequence belongs to the pseudouridine synthase TruB family. Type 1 subfamily.

The enzyme catalyses uridine(55) in tRNA = pseudouridine(55) in tRNA. In terms of biological role, responsible for synthesis of pseudouridine from uracil-55 in the psi GC loop of transfer RNAs. The polypeptide is tRNA pseudouridine synthase B (Syntrophobacter fumaroxidans (strain DSM 10017 / MPOB)).